Reading from the N-terminus, the 177-residue chain is Large ribosomal subunit protein uL6 (177 aa).

It belongs to the universal ribosomal protein uL6 family. As to quaternary structure, part of the 50S ribosomal subunit.

Functionally, this protein binds to the 23S rRNA, and is important in its secondary structure. It is located near the subunit interface in the base of the L7/L12 stalk, and near the tRNA binding site of the peptidyltransferase center. This chain is Large ribosomal subunit protein uL6, found in Methylobacterium sp. (strain 4-46).